Reading from the N-terminus, the 591-residue chain is MEGKNEDMHTPRGPEDASNIADEYPSPERQQQGDMLGHDIHHHLDMHHERDARDTHSPGQTDMQTELAKQVAAQAIEAAVAHVQANADRQEAGGTEACGQVSNGNQRDIHMREEPHLSNSQHHPRQPVFPRSRQSFIALSPTSVATSIAGPSTLRRSPLPDTFSRSPAPLSANDQIAILRESYARNPNPDRKELERLAARTGRPWNKIREYFRQRRNKLRGLEQLEKMEEPGRASGWLQITYRSAPVTSQVPQLALYNSYRHRFDPYSSSTPLLGGQDLIQLACATFPGCEMARDDGEYVLKGLKEKDKEREDALGDNEAMGRKGREIDPEEWERGMEGLVEPLRAGSWLLSSFQSQPGTSGSDITQTDLYTSYAARFSSLLTGVSGTSNGNAHLNGHHGLSDEEAELRNHAESLKAFEDAGLGDTQGEEDQPPTVEESDQNETSPASFPADPNPLPQAPRESRLLTPVELINLTRMTFPACEPCVDSSGRFVIKGLERREGLEPGRKSREGEMFPFALMSEKQPGEEFVKVMKRKLASLHPDAIERRNAGESKRKRDDALTEEDKELIEGLKRFRGSKLGEQVRDVCVSQ.

Positions 1–15 (MEGKNEDMHTPRGPE) are enriched in basic and acidic residues. Disordered stretches follow at residues 1–37 (MEGK…DMLG) and 148–168 (IAGP…RSPA). The homeobox DNA-binding region spans 176 to 223 (IAILRESYARNPNPDRKELERLAARTGRPWNKIREYFRQRRNKLRGLE). Disordered stretches follow at residues 420–463 (DAGL…PRES) and 543–563 (DAIE…ALTE). Over residues 427–441 (QGEEDQPPTVEESDQ) the composition is skewed to acidic residues. Residues 543-560 (DAIERRNAGESKRKRDDA) show a composition bias toward basic and acidic residues.

The protein localises to the nucleus. Functionally, general stress-responsive transcription factor that governs multiple stress responses and adaptations. Plays a key role in virulence. Mediates the expression of LAC1, which is the major laccase involved in melanin synthesis. Positively regulates BZP4 induction under conditions of nutrient starvation and basal expression levels of MBS1 and USV101, 3 major transcription factors that independently contribute to melanin production. Also acts as a key regulator of ergosterol gene expression. This Cryptococcus neoformans var. grubii serotype A (strain H99 / ATCC 208821 / CBS 10515 / FGSC 9487) (Filobasidiella neoformans var. grubii) protein is Homeobox domain-containing transcription factor HOB1.